A 254-amino-acid chain; its full sequence is CRISPR-associated endonuclease Cas1 (254 aa).

Residues glutamate 78, histidine 146, and glutamate 161 each contribute to the Mn(2+) site.

The protein belongs to the CRISPR-associated endonuclease Cas1 family. In terms of assembly, homodimer, forms a heterotetramer with a Cas2 homodimer. Requires Mg(2+) as cofactor. The cofactor is Mn(2+).

Functionally, CRISPR (clustered regularly interspaced short palindromic repeat), is an adaptive immune system that provides protection against mobile genetic elements (viruses, transposable elements and conjugative plasmids). CRISPR clusters contain spacers, sequences complementary to antecedent mobile elements, and target invading nucleic acids. CRISPR clusters are transcribed and processed into CRISPR RNA (crRNA). Acts as a dsDNA endonuclease. Involved in the integration of spacer DNA into the CRISPR cassette. The chain is CRISPR-associated endonuclease Cas1 from Leptospira interrogans serogroup Icterohaemorrhagiae serovar Lai (strain 56601).